A 138-amino-acid chain; its full sequence is Transcription antitermination protein NusB (138 aa).

The protein belongs to the NusB family.

In terms of biological role, involved in transcription antitermination. Required for transcription of ribosomal RNA (rRNA) genes. Binds specifically to the boxA antiterminator sequence of the ribosomal RNA (rrn) operons. The polypeptide is Transcription antitermination protein NusB (Leptospira borgpetersenii serovar Hardjo-bovis (strain JB197)).